We begin with the raw amino-acid sequence, 1025 residues long: Dihydropyrimidine dehydrogenase [NADP(+)] (1025 aa).

Positions 1 to 3 are excised as a propeptide; that stretch reads MAP. Residues 69–100 enclose the 4Fe-4S ferredoxin-type 1 domain; the sequence is ERGALREAMRCLKCADAPCQKSCPTHLDIKSF. [4Fe-4S] cluster is bound by residues Cys-79, Cys-82, Cys-87, and Cys-91. Val-129 contacts FAD. [4Fe-4S] cluster is bound by residues Cys-130, Cys-136, Cys-140, and Gln-156. Residues 194 to 198, 218 to 226, Arg-235, and Leu-261 each bind FAD; these read GAGPA and EKQEYVGGL. NADP(+) contacts are provided by residues 340 to 343, 364 to 365, and Arg-371; these read AGDT and RK. Lys-384 carries the N6-acetyllysine modification. NADP(+) contacts are provided by residues 437–439 and 481–487; these read AFG and DIVGMAN. An FAD-binding site is contributed by 480–489; the sequence is GDIVGMANTT. FMN-binding positions include Ser-550 and 574–575; that span reads KT. Substrate-binding positions include Asn-609 and 668–670; that span reads NLS. The Proton acceptor role is filled by Cys-671. Lys-709 contacts FMN. 736–737 serves as a coordination point for substrate; it reads NT. FMN-binding positions include Gly-767, 793–795, and 816–817; these read TGG and CS. 2 consecutive 4Fe-4S ferredoxin-type domains span residues 944–976 and 978–1007; these read VVAV…FDPE and HLPT…MVSR. The [4Fe-4S] cluster site is built by Cys-953, Cys-956, Cys-959, Cys-963, Cys-986, Cys-989, Cys-992, and Cys-996.

It belongs to the dihydropyrimidine dehydrogenase family. As to quaternary structure, homodimer. It depends on FAD as a cofactor. Requires FMN as cofactor. [4Fe-4S] cluster serves as cofactor.

The protein localises to the cytoplasm. It carries out the reaction 5,6-dihydrouracil + NADP(+) = uracil + NADPH + H(+). The enzyme catalyses 5,6-dihydrothymine + NADP(+) = thymine + NADPH + H(+). Its pathway is amino-acid biosynthesis; beta-alanine biosynthesis. Inactivated by 5-iodouracil. Functionally, involved in pyrimidine base degradation. Catalyzes the reduction of uracil and thymine. This Sus scrofa (Pig) protein is Dihydropyrimidine dehydrogenase [NADP(+)] (DPYD).